Consider the following 145-residue polypeptide: Maximins 5/H4 type 2 (145 aa).

Residues Met1–Ala18 form the signal peptide. 2 propeptides span residues Arg19–Arg43 and Thr74–Arg124. Leu144 carries the leucine amide modification.

The protein belongs to the bombinin family. Expressed by the skin glands.

The protein resides in the secreted. Functionally, maximin-5 shows antibacterial activity against both Gram-positive and Gram-negative bacteria. The only exception is the resistance of E.coli. Also shows antimicrobial activity against fungi C.albicans, A.flavus and P.uticale. It has little hemolytic activity. It does not possess a significant cytotoxicity against tumor cell lines. It does not possess a significant anti-HIV activity. In terms of biological role, maximin-H4 shows antibacterial activity against both Gram-positive and Gram-negative bacteria. It also shows antimicrobial activity against the fungus C.albicans. Shows strong hemolytic activity. In Bombina maxima (Giant fire-bellied toad), this protein is Maximins 5/H4 type 2.